We begin with the raw amino-acid sequence, 997 residues long: Kinesin-like protein KIF19 (997 aa).

The 336-residue stretch at 11-346 (QLMVALRVRP…LTYAGRAKNI (336 aa)) folds into the Kinesin motor domain. Residue 104-111 (GPTGCGKT) participates in ATP binding. Residues 361 to 388 (IAQYTSIIADLRGEIQRLKCKIDQQAGR) adopt a coiled-coil conformation. A compositionally biased stretch (basic and acidic residues) spans 477–494 (EERRKESYTKEDSEKDSD). 4 disordered regions span residues 477–509 (EERR…EVAS), 665–704 (KITP…GTDS), 718–759 (QVKS…SSEN), and 784–997 (AAQR…LQHN). Residues 506 to 551 (EVASARENIAALVGEQKKLRKEKLALEQRCRELRARGRRLEETLPR) adopt a coiled-coil conformation. A compositionally biased stretch (polar residues) spans 683-697 (KTLSSEAQRPQNNTL). A compositionally biased stretch (low complexity) spans 750-759 (INSSPESSEN). Composition is skewed to polar residues over residues 835-851 (TLQH…STGE) and 950-959 (PNQNTGSGNP).

Belongs to the TRAFAC class myosin-kinesin ATPase superfamily. Kinesin family. In terms of tissue distribution, strongly expressed in the oviduct and trachea. Expressed in testis, lung, ovary and brain.

Its subcellular location is the cytoplasm. The protein localises to the cytoskeleton. It is found in the cell projection. It localises to the cilium. Its function is as follows. Plus end-directed microtubule-dependent motor protein that regulates the length of motile cilia by mediating depolymerization of microtubules at ciliary tips. The chain is Kinesin-like protein KIF19 (Kif19) from Mus musculus (Mouse).